The chain runs to 107 residues: UPF0060 membrane protein RPB_2370 (107 aa).

The next 4 helical transmembrane spans lie at Ile-5–Leu-25, Val-31–Val-51, Ala-61–Val-81, and Arg-85–Pro-105.

Belongs to the UPF0060 family.

Its subcellular location is the cell inner membrane. The chain is UPF0060 membrane protein RPB_2370 from Rhodopseudomonas palustris (strain HaA2).